A 205-amino-acid polypeptide reads, in one-letter code: Probable nicotinate-nucleotide adenylyltransferase (205 aa).

It belongs to the NadD family.

The catalysed reaction is nicotinate beta-D-ribonucleotide + ATP + H(+) = deamido-NAD(+) + diphosphate. Its pathway is cofactor biosynthesis; NAD(+) biosynthesis; deamido-NAD(+) from nicotinate D-ribonucleotide: step 1/1. Its function is as follows. Catalyzes the reversible adenylation of nicotinate mononucleotide (NaMN) to nicotinic acid adenine dinucleotide (NaAD). The polypeptide is Probable nicotinate-nucleotide adenylyltransferase (Nocardioides sp. (strain ATCC BAA-499 / JS614)).